Consider the following 995-residue polypeptide: DNA repair protein Rev1 (995 aa).

The BRCT domain maps to 35–121 (RKSDLFQGIS…KIVDYKPYLL (87 aa)). Disordered stretches follow at residues 135 to 164 (GKPKDNGANESKSDVEPPKDKAEVEVDSTK) and 182 to 211 (VATSPEKEASASESKITNLSTTSNNSTTAR). Positions 136 to 164 (KPKDNGANESKSDVEPPKDKAEVEVDSTK) are enriched in basic and acidic residues. Over residues 192-211 (ASESKITNLSTTSNNSTTAR) the composition is skewed to low complexity. The 231-residue stretch at 275–505 (VMHIDMDCFF…MSLDLLPGVG (231 aa)) folds into the UmuC domain. Aspartate 279 serves as a coordination point for Mg(2+). Residues 361-367 (SCSYEAR), asparagine 373, and aspartate 421 contribute to the dCTP site. Residue aspartate 421 coordinates Mg(2+). The active site involves glutamate 422. The interaction with PolI stretch occupies residues 696-868 (SEMRKDKPIP…HYIRSDQIVA (173 aa)). The interaction with PolH/DNApol-eta stretch occupies residues 878–995 (VNPHILKLIS…IEYIRCIKCS (118 aa)).

It belongs to the DNA polymerase type-Y family. In terms of assembly, interacts (via C-terminus) with PolH/DNApol-eta (via C-terminal regions). Interacts (via C-terminus) with PolI. Requires Mg(2+) as cofactor.

The protein resides in the nucleus. Its function is as follows. Deoxycytidyl transferase involved in DNA repair. Transfers a dCMP residue from dCTP to the 3'-end of a DNA primer in a template-dependent reaction. May assist in the first step in the bypass of abasic lesions by the insertion of a nucleotide opposite the lesion. Required for normal induction of mutations by physical and chemical agents. During homologous recombination (HR) repair of DNA double-strand breaks (DSBs) regulates the extent of repair synthesis. Possibly recruits the DNA polymerase zeta complex or another translesion polymerase to early DSB repair intermediates to initiate repair synthesis, while also blocking the access of more processive polymerases preventing them from acting during the initial stages of HR repair. This Drosophila melanogaster (Fruit fly) protein is DNA repair protein Rev1.